Here is a 577-residue protein sequence, read N- to C-terminus: Cytochrome P450 714D1 (577 aa).

Over 1-3 (MES) the chain is Lumenal. A helical; Signal-anchor for type III membrane protein transmembrane segment spans residues 4–24 (FFVFFTAAALPVVVAAAVIAG). Over 25 to 577 (LCITAAWLAR…STAPVHSSHN (553 aa)) the chain is Cytoplasmic. The disordered stretch occupies residues 315–343 (REHGGKAAPPSPPERDFLGSIIENSGGQP). Residue Cys504 participates in heme binding.

It belongs to the cytochrome P450 family. Requires heme as cofactor. Expressed in rapidly elongating or dividing tissues, including the shoot apical meristem, the intercalary meristem and elongating zones of internodes, and panicle but not in young seedlings, roots and leaves. During the heading stage, the highest expression is detected in the flowering spikelets, anthers, the divisional zone and the node of the uppermost internode.

The protein resides in the endoplasmic reticulum membrane. Functionally, catalyzes the 16alpha,17-epoxidation on non-13-hydroxylated gibberellins (GAs), including GA4, GA9, and GA12. No activity with GA1, GA20, GA53 or ent-kaurenoic acid. Reduces the biological activity of GAs. The polypeptide is Cytochrome P450 714D1 (CYP714D1) (Oryza sativa subsp. japonica (Rice)).